Reading from the N-terminus, the 378-residue chain is Putative glutamate--cysteine ligase 2-1 (378 aa).

The protein belongs to the glutamate--cysteine ligase type 2 family. YbdK subfamily.

The enzyme catalyses L-cysteine + L-glutamate + ATP = gamma-L-glutamyl-L-cysteine + ADP + phosphate + H(+). Functionally, ATP-dependent carboxylate-amine ligase which exhibits weak glutamate--cysteine ligase activity. The polypeptide is Putative glutamate--cysteine ligase 2-1 (Corynebacterium efficiens (strain DSM 44549 / YS-314 / AJ 12310 / JCM 11189 / NBRC 100395)).